The chain runs to 103 residues: Defensin-like protein 290 (103 aa).

Residues 1–29 form the signal peptide; sequence MTALRRTISIIFVFYLSCTLFVNIFGVQA. Cystine bridges form between cysteine 33–cysteine 50, cysteine 39–cysteine 55, cysteine 43–cysteine 57, cysteine 72–cysteine 92, cysteine 78–cysteine 98, and cysteine 84–cysteine 100.

It belongs to the DEFL family.

The protein localises to the secreted. This is Defensin-like protein 290 from Arabidopsis thaliana (Mouse-ear cress).